The following is a 200-amino-acid chain: Dipicolinate synthase subunit B (200 aa).

In terms of assembly, dipicolinate synthase likely consists of DpaA and DpaB, since both proteins are required for DPA synthesis.

The catalysed reaction is (S)-2,3-dihydrodipicolinate + NADP(+) = dipicolinate + NADPH + H(+). Its function is as follows. Together with DpaA, catalyzes the conversion of dihydrodipicolinate to dipicolinate (DPA), which constitutes up to 10% of the dry weight of the spore. This is Dipicolinate synthase subunit B (dpaB) from Bacillus subtilis (strain 168).